Reading from the N-terminus, the 372-residue chain is DNA replication and repair protein RecF (372 aa).

30 to 37 (GANGQGKT) is a binding site for ATP.

Belongs to the RecF family.

It is found in the cytoplasm. The RecF protein is involved in DNA metabolism; it is required for DNA replication and normal SOS inducibility. RecF binds preferentially to single-stranded, linear DNA. It also seems to bind ATP. The polypeptide is DNA replication and repair protein RecF (Heliobacterium modesticaldum (strain ATCC 51547 / Ice1)).